The primary structure comprises 728 residues: Probable 3',5'-cyclic phosphodiesterase pde-5 (728 aa).

One can recognise a GAF domain in the interval 214–371 (SMDAVIIKVM…HHAKLYDKIR (158 aa)). The PDEase domain occupies 390–709 (CNADEVNKLK…KKWEELAEEQ (320 aa)). The active-site Proton donor is histidine 465. The a divalent metal cation site is built by histidine 469, histidine 503, aspartate 504, and aspartate 614. Residues 691–728 (MRERCEYNAKKWEELAEEQRKKQEALAQQNGEANETQE) adopt a coiled-coil conformation. The interval 708 to 728 (EQRKKQEALAQQNGEANETQE) is disordered. Positions 716–728 (LAQQNGEANETQE) are enriched in polar residues.

Belongs to the cyclic nucleotide phosphodiesterase family. A divalent metal cation serves as cofactor.

It catalyses the reaction a nucleoside 3',5'-cyclic phosphate + H2O = a nucleoside 5'-phosphate + H(+). Its function is as follows. Redundantly with pde-1, plays a role in the AFD thermosensory neurons to regulate microvilli receptive ending morphology, possibly by regulating cGMP levels. This chain is Probable 3',5'-cyclic phosphodiesterase pde-5 (pde-5), found in Caenorhabditis elegans.